A 242-amino-acid polypeptide reads, in one-letter code: Probable ergothioneine transport ATP-binding protein EgtUA (242 aa).

The region spanning 2–236 (IEYKNVALRY…PATDFVADLF (235 aa)) is the ABC transporter domain. 34–41 (GPSGSGKT) is an ATP binding site.

Belongs to the ABC transporter superfamily. The complex is probably composed of at least an ATP-binding protein (EgtUA) and a transmembrane protein (EgtUBC).

It is found in the cell inner membrane. It carries out the reaction ergothioneine(out) + ATP + H2O = ergothioneine(in) + ADP + phosphate + H(+). Its function is as follows. Part of an ABC transporter complex EgtU required for the uptake of ergothioneine (EGT), a natural low-molecular weight (LMW) thiol antioxidant. Probably responsible for energy coupling to the transport system. This Streptococcus pneumoniae serotype 2 (strain D39 / NCTC 7466) protein is Probable ergothioneine transport ATP-binding protein EgtUA.